Here is a 283-residue protein sequence, read N- to C-terminus: Bifunctional protein FolD (283 aa).

NADP(+)-binding positions include 165-167, Ser-190, and Ile-231; that span reads GRS.

This sequence belongs to the tetrahydrofolate dehydrogenase/cyclohydrolase family. As to quaternary structure, homodimer.

It carries out the reaction (6R)-5,10-methylene-5,6,7,8-tetrahydrofolate + NADP(+) = (6R)-5,10-methenyltetrahydrofolate + NADPH. It catalyses the reaction (6R)-5,10-methenyltetrahydrofolate + H2O = (6R)-10-formyltetrahydrofolate + H(+). The protein operates within one-carbon metabolism; tetrahydrofolate interconversion. Its function is as follows. Catalyzes the oxidation of 5,10-methylenetetrahydrofolate to 5,10-methenyltetrahydrofolate and then the hydrolysis of 5,10-methenyltetrahydrofolate to 10-formyltetrahydrofolate. The polypeptide is Bifunctional protein FolD (Herminiimonas arsenicoxydans).